We begin with the raw amino-acid sequence, 179 residues long: Large ribosomal subunit protein uL5 (179 aa).

Belongs to the universal ribosomal protein uL5 family. As to quaternary structure, part of the 50S ribosomal subunit; part of the 5S rRNA/L5/L18/L25 subcomplex. Contacts the 5S rRNA and the P site tRNA. Forms a bridge to the 30S subunit in the 70S ribosome.

This is one of the proteins that bind and probably mediate the attachment of the 5S RNA into the large ribosomal subunit, where it forms part of the central protuberance. In the 70S ribosome it contacts protein S13 of the 30S subunit (bridge B1b), connecting the 2 subunits; this bridge is implicated in subunit movement. Contacts the P site tRNA; the 5S rRNA and some of its associated proteins might help stabilize positioning of ribosome-bound tRNAs. This Yersinia pestis protein is Large ribosomal subunit protein uL5.